Consider the following 66-residue polypeptide: Large ribosomal subunit protein bL35 (66 aa).

It belongs to the bacterial ribosomal protein bL35 family.

This is Large ribosomal subunit protein bL35 from Azorhizobium caulinodans (strain ATCC 43989 / DSM 5975 / JCM 20966 / LMG 6465 / NBRC 14845 / NCIMB 13405 / ORS 571).